Here is a 101-residue protein sequence, read N- to C-terminus: Urease subunit beta (101 aa).

The protein belongs to the urease beta subunit family. Heterotrimer of UreA (gamma), UreB (beta) and UreC (alpha) subunits. Three heterotrimers associate to form the active enzyme.

Its subcellular location is the cytoplasm. It catalyses the reaction urea + 2 H2O + H(+) = hydrogencarbonate + 2 NH4(+). It functions in the pathway nitrogen metabolism; urea degradation; CO(2) and NH(3) from urea (urease route): step 1/1. The chain is Urease subunit beta from Thermosynechococcus vestitus (strain NIES-2133 / IAM M-273 / BP-1).